Here is a 385-residue protein sequence, read N- to C-terminus: Urotensin-2 receptor (385 aa).

Residues 1 to 53 (MALSLESTSFPMLAVSRSTASELPGGFNVSHNSSWTGPTDPSSLQDLVATGVI) lie on the Extracellular side of the membrane. Residues N28 and N32 are each glycosylated (N-linked (GlcNAc...) asparagine). Residues 54–76 (GAVLSTMGVVGVVGNVYTLVVMC) form a helical membrane-spanning segment. Residues 77–86 (RFLRASASMY) are Cytoplasmic-facing. Residues 87 to 112 (VYVVNLALADLLYLLSIPFIVATYVT) form a helical membrane-spanning segment. At 113–123 (KDWHFGDVGCR) the chain is on the extracellular side. C122 and C198 are oxidised to a cystine. The helical transmembrane segment at 124-145 (VLFSLDFLTMHASIFTLTIMSS) threads the bilayer. The Cytoplasmic portion of the chain corresponds to 146–166 (ERYAAVLRPLDTVQRSKGYRK). Residues 167-185 (LLALGTWLLALLLTLPMML) form a helical membrane-spanning segment. The Extracellular segment spans residues 186–208 (AIRLVRRGSKSLCLPAWGPRAHR). Residues 209 to 231 (TYLTLLFGTSIVGPGLVIGLLYI) form a helical membrane-spanning segment. Over 232-257 (RLARAYWLSQQASFKQTRRLPNPRVL) the chain is Cytoplasmic. Residues 258-283 (YLILGIVLLFWACFLPFWLWQLLAQY) form a helical membrane-spanning segment. Residues 284–298 (HQAMPLTPETARIIN) lie on the Extracellular side of the membrane. A helical membrane pass occupies residues 299–320 (YLTACLTYGNSCINPFLYTLLT). The Cytoplasmic portion of the chain corresponds to 321–385 (KNYREYLRGR…SPVPPNGAFV (65 aa)).

It belongs to the G-protein coupled receptor 1 family.

Its subcellular location is the cell membrane. High affinity receptor for urotensin-2 and urotensin-2B. The activity of this receptor is mediated by a G-protein that activate a phosphatidylinositol-calcium second messenger system. The chain is Urotensin-2 receptor (Uts2r) from Mus musculus (Mouse).